The chain runs to 246 residues: Pyridoxine 5'-phosphate synthase (246 aa).

3-amino-2-oxopropyl phosphate-binding residues include Asn-8 and Arg-19. His-44 acts as the Proton acceptor in catalysis. Arg-46 and His-51 together coordinate 1-deoxy-D-xylulose 5-phosphate. Catalysis depends on Glu-76, which acts as the Proton acceptor. Thr-106 serves as a coordination point for 1-deoxy-D-xylulose 5-phosphate. Residue His-198 is the Proton donor of the active site. 3-amino-2-oxopropyl phosphate-binding positions include Asp-199 and Gly-221–His-222.

This sequence belongs to the PNP synthase family. As to quaternary structure, homooctamer; tetramer of dimers.

It is found in the cytoplasm. It catalyses the reaction 3-amino-2-oxopropyl phosphate + 1-deoxy-D-xylulose 5-phosphate = pyridoxine 5'-phosphate + phosphate + 2 H2O + H(+). It functions in the pathway cofactor biosynthesis; pyridoxine 5'-phosphate biosynthesis; pyridoxine 5'-phosphate from D-erythrose 4-phosphate: step 5/5. Its function is as follows. Catalyzes the complicated ring closure reaction between the two acyclic compounds 1-deoxy-D-xylulose-5-phosphate (DXP) and 3-amino-2-oxopropyl phosphate (1-amino-acetone-3-phosphate or AAP) to form pyridoxine 5'-phosphate (PNP) and inorganic phosphate. In Brucella abortus (strain S19), this protein is Pyridoxine 5'-phosphate synthase.